We begin with the raw amino-acid sequence, 136 residues long: Large-conductance mechanosensitive channel (136 aa).

4 helical membrane passes run 9 to 29 (AFASRGNVIDMAVGIIIGAAF), 32 to 52 (IVSSFVADIIMPPIGIILGGV), 54 to 74 (FSDLSFVLLAAQGDAPAVVIA), and 79 to 99 (IQTVVDFTIIAFAIFMGLKAI).

The protein belongs to the MscL family. Homopentamer.

It is found in the cell inner membrane. Its function is as follows. Channel that opens in response to stretch forces in the membrane lipid bilayer. May participate in the regulation of osmotic pressure changes within the cell. The chain is Large-conductance mechanosensitive channel from Vibrio cholerae serotype O1 (strain ATCC 39541 / Classical Ogawa 395 / O395).